Here is an 888-residue protein sequence, read N- to C-terminus: MQTHEIRERFTNHFVNAGHQAVPSASLILDDPNLLFVNAGMVPFKPYFLGQQTPPFENGTATSIQKCVRTLDIEEVGITTRHNTFFQMAGNFSFGQYFKEGAITHAWGLLTGSVADGGFGLDPERLWVTVYLDDDEAAEIWEKKIGVPAERIQRLGMADNYWSMGVPGPCGPCSEIYYDRGEKYGKEGGPVADDNRYMEIWNLVFMEKERGQGIGKDNFEILGDLPKKNIDTGMGVERVACILQDVENVYETDLLRPVIDVAETLTGTKYGSDNTSDIRFRVIADHSRTGMMLILDGVTPGNEGRGYILRRLLRRIIRSARLLGATGETMEQFMNTIMDTMTPSYPEIADNRERIMRVAVTEERAFLKTLVSGTHLFEEAATSIKAAGSTKVAGAQAFALHDTYGFPIDLTLEMAAEAGLEVDVEGFDSLMAEQRSRAKADSQAKKHGHTDLSIYREWVDNNPTVFTGFEELDSQSKVLGLLSDGAKISEATEGQEVEVILDQSPLYAESGGQLGDRGQILLGDTVLDVHDVQKIGKKLWVHKALVANGGLAVGDEVVASVDKQWRHAARQAHTATHLIHAALRQVLGPTAVQAGSMNKPGYLRFDFNYTEQLTPAQVEQIQAITNEAVDTDWAVNTVETSLEEAKAMGAMALFGENYGSTVRVVEIGGPFSMELCGGTHVAHSSQIGPVALLGESSIGSGVRRIEAYSGLNSFNYLSKERALAEGLASSLKAPSEELPERVAQLVDKLKAAEKEIEALHRQQLMAQTADLLNNAQEIGGVTTLLLRVKDNTNAGDLRTIATTLKDKLGDREGVLVIASDNAGKVPFVVAATKAAVARGAHSGNLVKLVGSYIDGRGGGKADLAQGSGANIAGLESAFGAVRAEIEAL.

4 residues coordinate Zn(2+): histidine 573, histidine 577, cysteine 676, and histidine 680.

It belongs to the class-II aminoacyl-tRNA synthetase family. It depends on Zn(2+) as a cofactor.

The protein resides in the cytoplasm. It catalyses the reaction tRNA(Ala) + L-alanine + ATP = L-alanyl-tRNA(Ala) + AMP + diphosphate. Functionally, catalyzes the attachment of alanine to tRNA(Ala) in a two-step reaction: alanine is first activated by ATP to form Ala-AMP and then transferred to the acceptor end of tRNA(Ala). Also edits incorrectly charged Ser-tRNA(Ala) and Gly-tRNA(Ala) via its editing domain. The chain is Alanine--tRNA ligase from Corynebacterium glutamicum (strain R).